A 133-amino-acid polypeptide reads, in one-letter code: Large ribosomal subunit protein uL22 (133 aa).

This sequence belongs to the universal ribosomal protein uL22 family. Part of the 50S ribosomal subunit.

This protein binds specifically to 23S rRNA; its binding is stimulated by other ribosomal proteins, e.g. L4, L17, and L20. It is important during the early stages of 50S assembly. It makes multiple contacts with different domains of the 23S rRNA in the assembled 50S subunit and ribosome. In terms of biological role, the globular domain of the protein is located near the polypeptide exit tunnel on the outside of the subunit, while an extended beta-hairpin is found that lines the wall of the exit tunnel in the center of the 70S ribosome. The polypeptide is Large ribosomal subunit protein uL22 (Aquifex pyrophilus).